The primary structure comprises 264 residues: Triosephosphate isomerase (264 aa).

13–15 contributes to the substrate binding site; the sequence is NWK. Catalysis depends on H106, which acts as the Electrophile. The active-site Proton acceptor is E179. Substrate contacts are provided by residues G185, S223, and 244-245; that span reads GG.

The protein belongs to the triosephosphate isomerase family. As to quaternary structure, homodimer.

It is found in the cytoplasm. The enzyme catalyses D-glyceraldehyde 3-phosphate = dihydroxyacetone phosphate. It participates in carbohydrate biosynthesis; gluconeogenesis. Its pathway is carbohydrate degradation; glycolysis; D-glyceraldehyde 3-phosphate from glycerone phosphate: step 1/1. Involved in the gluconeogenesis. Catalyzes stereospecifically the conversion of dihydroxyacetone phosphate (DHAP) to D-glyceraldehyde-3-phosphate (G3P). In Acinetobacter baumannii (strain SDF), this protein is Triosephosphate isomerase.